A 101-amino-acid polypeptide reads, in one-letter code: Small ribosomal subunit protein uS14 (101 aa).

It belongs to the universal ribosomal protein uS14 family. Part of the 30S ribosomal subunit. Contacts proteins S3 and S10.

Its function is as follows. Binds 16S rRNA, required for the assembly of 30S particles and may also be responsible for determining the conformation of the 16S rRNA at the A site. This Sphingopyxis alaskensis (strain DSM 13593 / LMG 18877 / RB2256) (Sphingomonas alaskensis) protein is Small ribosomal subunit protein uS14.